The chain runs to 383 residues: Dynein axonemal assembly factor 11 (383 aa).

LRR repeat units lie at residues 20–45, 46–66, 67–89, and 90–110; these read LSNLKEVALHQQDIERIELIGDACRE, LEILYLCNNYISRIEGLQHLK, YLKYLNLAVNNITYIEGLEGCEA, and LERLDLTLNFVADVTCVERLR. In terms of domain architecture, LRRCT spans 128-146; that stretch reads VAGYRAYVVHALPQLRELD. Positions 201–244 are disordered; it reads KGERLYGHTPEERLQMLREKEEEERRKREEQRERERSSQFGAIR. The stretch at 211–239 forms a coiled coil; the sequence is EERLQMLREKEEEERRKREEQRERERSSQ.

Belongs to the tilB family.

Its subcellular location is the cytoplasm. The protein localises to the cytoskeleton. The protein resides in the flagellum basal body. Its function is as follows. Involved in the regulation of the cell cycle; is required for the basal body replication and new flagellum biogenesis. This Trypanosoma brucei brucei protein is Dynein axonemal assembly factor 11 (dnaaf11).